Reading from the N-terminus, the 693-residue chain is Glycine--tRNA ligase beta subunit (693 aa).

This sequence belongs to the class-II aminoacyl-tRNA synthetase family. In terms of assembly, tetramer of two alpha and two beta subunits.

The protein localises to the cytoplasm. It catalyses the reaction tRNA(Gly) + glycine + ATP = glycyl-tRNA(Gly) + AMP + diphosphate. The chain is Glycine--tRNA ligase beta subunit from Ligilactobacillus salivarius (strain UCC118) (Lactobacillus salivarius).